Here is a 929-residue protein sequence, read N- to C-terminus: MTDYSKTVNLLESPFPMRGNLAKREPAWLKSWYEQKRYQKLREIAKGRPKFILHDGPPYANGDIHIGHAVNKILKDIIIRSKTQAGFDAPYVPGWDCHGLPIEVMVEKLHGKDMPKARFRELCREYAAEQIARQKKDFIRLGVLGDWDNPYLTMDFKTEADTVRMLGEIYKSGYLYRGAKPVQFCLDCGSSLAEAEVEYKDKVSPAIDVAYPFKNTVALAAAFGLAGIEGKAFAVIWTTTPWTLPASQAVSAGADVVYQLIDTPKGKLVLAKDLAEGALKRYGFSDGIAILAETTGDKLENLHMNHPFLERDIPMLNGEHVTTDAGTGLVHTAPAHGLEDYAVCNKYGIELYNPVNAEGKYISETPRVAGMSVWEANPVILQWPEETGNLLASSKIEHSYAHCWRHKTPLIYRATGQWFVGMDKAGSDGKTLRDKAIKAVDDTEFFPPWGRARLESMIEGRPDWVVSRQRYWGTPMTFFVHKETGELHPNSAELLEKVAQRIEEKGIEAWFSLDKSELLSAEDCEHYDKLPDTMDVWFDSGSTHYSVVKQREELEWPADLYLEGSDQHRGWFQSSMLTGCASSMGRAPYKQLLTHGFVVDQNGRKMSKSIGNVVAPQEVYNEFGADILRLWAASTDYSGELAISKEILKRVTESYRRIRNTLSFLFANLSDFNPIEDAVQQADMVEIDRYALVLARRLQERLAGGYYPRYAFHFAVKDIVSFCSEDLGAFYLDILKDRLYTTKADSRARRSAQTALYHITRSLVLLIAPILCFTGEEAWDIIGGGEEDSVLFHTWHEFPAINEKAEAELVKKWTAIREAREAVTAAIEPLRADKTVGSSLQAEAEITAPEEMAGYLNALGEELRFALLVSKAEVKVGDELAVAAKASDGEKCERCWHYTRDVGAVAGYETVCKRCAENVGGEGETRHYA.

Positions 58–68 match the 'HIGH' region motif; sequence PYANGDIHIGH. An L-isoleucyl-5'-AMP-binding site is contributed by Glu563. The 'KMSKS' region signature appears at 605 to 609; sequence KMSKS. Lys608 serves as a coordination point for ATP. Zn(2+) is bound by residues Cys892, Cys895, Cys912, and Cys915.

The protein belongs to the class-I aminoacyl-tRNA synthetase family. IleS type 1 subfamily. In terms of assembly, monomer. The cofactor is Zn(2+).

The protein localises to the cytoplasm. The catalysed reaction is tRNA(Ile) + L-isoleucine + ATP = L-isoleucyl-tRNA(Ile) + AMP + diphosphate. Catalyzes the attachment of isoleucine to tRNA(Ile). As IleRS can inadvertently accommodate and process structurally similar amino acids such as valine, to avoid such errors it has two additional distinct tRNA(Ile)-dependent editing activities. One activity is designated as 'pretransfer' editing and involves the hydrolysis of activated Val-AMP. The other activity is designated 'posttransfer' editing and involves deacylation of mischarged Val-tRNA(Ile). This chain is Isoleucine--tRNA ligase, found in Neisseria gonorrhoeae (strain ATCC 700825 / FA 1090).